Consider the following 831-residue polypeptide: Probable glucan 1,3-beta-glucosidase D (831 aa).

Basic and acidic residues-rich tracts occupy residues Met1 to Val24, Arg44 to Glu56, Arg79 to Ala93, Ser102 to Arg115, Arg137 to Ala151, and Gln198 to Lys213. Disordered stretches follow at residues Met1–His179 and His192–Lys241. Residues Met1–Lys297 lie on the Cytoplasmic side of the membrane. Residues Trp298–Val318 form a helical; Signal-anchor for type II membrane protein membrane-spanning segment. The Extracellular segment spans residues Met319–Tyr831. Asn376, Asn381, Asn393, Asn410, Asn442, Asn546, and Asn558 each carry an N-linked (GlcNAc...) asparagine glycan. Glu597 serves as the catalytic Proton donor. Residues Asn610, Asn636, Asn669, and Asn689 are each glycosylated (N-linked (GlcNAc...) asparagine). Residue Glu702 is the Nucleophile of the active site.

Belongs to the glycosyl hydrolase 5 (cellulase A) family.

The protein localises to the cell membrane. The catalysed reaction is Successive hydrolysis of beta-D-glucose units from the non-reducing ends of (1-&gt;3)-beta-D-glucans, releasing alpha-glucose.. Its function is as follows. Glucosidase involved in the degradation of cellulosic biomass. Active on lichenan. This Aspergillus flavus (strain ATCC 200026 / FGSC A1120 / IAM 13836 / NRRL 3357 / JCM 12722 / SRRC 167) protein is Probable glucan 1,3-beta-glucosidase D (exgD).